Reading from the N-terminus, the 260-residue chain is Flap endonuclease Xni (260 aa).

Asp-104 is a Mg(2+) binding site. The 5'-3' exonuclease domain maps to 160–250 (VSPQQLTDYW…NGNLQQLRLP (91 aa)). K(+) is bound by residues Leu-171, Ala-172, Pro-180, Val-182, and Ile-185. The interaction with DNA stretch occupies residues 184–189 (GIGPKS).

Belongs to the Xni family. Mg(2+) is required as a cofactor. K(+) serves as cofactor.

Its function is as follows. Has flap endonuclease activity. During DNA replication, flap endonucleases cleave the 5'-overhanging flap structure that is generated by displacement synthesis when DNA polymerase encounters the 5'-end of a downstream Okazaki fragment. This is Flap endonuclease Xni from Pectobacterium atrosepticum (strain SCRI 1043 / ATCC BAA-672) (Erwinia carotovora subsp. atroseptica).